The following is a 1355-amino-acid chain: Ecdysone-induced protein 75B, isoform A (1355 aa).

Disordered stretches follow at residues 60-91 (QHQP…QQHS), 126-228 (RLKN…DSSY), 248-268 (ELEQ…EAKP), and 308-344 (ATQQ…NSSA). Residues 66 to 76 (QLHHQHQHQHQ) are compositionally biased toward basic residues. 2 stretches are compositionally biased toward low complexity: residues 77-91 (HQQQ…QQHS) and 143-179 (TLVK…QHQQ). The span at 200–213 (SGIDEDSPNSDEDC) shows a compositional bias: acidic residues. Composition is skewed to polar residues over residues 218-228 (PAGTSLEDSSY) and 254-264 (TTGGSNAQQQV). Low complexity-rich tracts occupy residues 308–321 (ATQQ…QHQH) and 330–344 (DSNC…NSSA). Residues 384-474 (SQLNYLCQKF…VGMSRDAVRF (91 aa)) constitute a DNA-binding region (nuclear receptor). The NR C4-type; degenerate zinc-finger motif lies at 387–421 (NYLCQKFDEKLDTALSNSSANTGRNTPAVTANEDA). An NR C4-type zinc finger spans residues 438–457 (CTKNQQCSILRINRNRCQYC). Residues 508–756 (DQPRLLAAVL…QQMWSMEDGN (249 aa)) form the NR LBD domain. 6 disordered regions span residues 780-821 (KSPL…SALA), 927-964 (LDSP…SVDD), 987-1007 (VSVS…KRQI), 1051-1117 (AEAD…SSHS), 1147-1260 (ENST…SNSA), and 1312-1344 (TVTA…NPGL). Composition is skewed to low complexity over residues 797–809 (GSPS…GVSL), 948–960 (SSGG…SPRS), 987–1001 (VSVS…STSS), 1053–1098 (ADAS…AQSQ), and 1106–1117 (SSPKASMASSHS). Composition is skewed to polar residues over residues 1149-1162 (STAA…VGNR) and 1174-1196 (AVQN…QRQQ). Low complexity-rich tracts occupy residues 1197 to 1233 (SVSP…SASS), 1242 to 1260 (STSN…SNSA), and 1315 to 1343 (ASNG…PNPG).

Belongs to the nuclear hormone receptor family. NR1 subfamily.

The protein localises to the nucleus. Its function is as follows. Implicated in the regulation of ecdysone-triggered gene hierarchies. Probably plays a key role in mediating the regulation of the larval molt by 20-OH-ecdysone. This is Ecdysone-induced protein 75B, isoform A (Eip75B) from Drosophila melanogaster (Fruit fly).